The primary structure comprises 415 residues: Dynein assembly factor with WD repeat domains 1 (415 aa).

WD repeat units lie at residues 90 to 129 (AHILPLTNVALNKSGSCFITGSYDRTCKLWDTASGEELNT), 132 to 174 (GHRN…HTFR), 175 to 214 (GHTAEIVCLSFNPQSTLVATGSMDTTAKLWNIQNGEEVCT), 217 to 256 (GHSAEIISLSFNTSGDRIITGSFDHTVVVWDADTGGKVNI), 259 to 298 (GHCAEISSALFNWDCSLILTGSMDKTCMLWDATNGKCVAT), 301 to 340 (GHDDEILDSCFDYTGKLIATASADGTARIFSAATRKCIAK), 343 to 384 (GHEG…QVLE), and 386 to 415 (HTDEIFSCTFNYKGNIVITGSKDNTCRIWR).

The protein belongs to the WD repeat WDR69 family. As to quaternary structure, interacts with IFT46.

It is found in the cytoplasm. It localises to the cytoskeleton. The protein resides in the flagellum basal body. The protein localises to the flagellum axoneme. Functionally, required for axonemal dynein assembly and ciliary motility in ciliated organs, including Kupffer's vesicle, during embryogenesis. Facilitates the onset of robust cilia motility during development. In Macaca fascicularis (Crab-eating macaque), this protein is Dynein assembly factor with WD repeat domains 1 (DAW1).